Consider the following 498-residue polypeptide: Zinc finger protein 79 (498 aa).

Residues 1–23 are disordered; the sequence is MLEEGVLPSPGPALPQEENTGEE. The region spanning 38–109 is the KRAB domain; it reads TFFSSVTVAF…EGEDLRSPSP (72 aa). C2H2-type zinc fingers lie at residues 193–215, 221–243, 249–271, 277–299, 305–327, 333–355, 361–383, 389–411, 417–439, 445–467, and 473–495; these read YACN…QKSH, YECS…QRIH, YKCS…QRTH, YRCS…QRIH, YECS…QRTH, YKCS…QRIH, YRCA…QRTH, YKCS…QKTH, YKCN…HIIH, YECN…QRIH, and YECS…QRLH.

This sequence belongs to the krueppel C2H2-type zinc-finger protein family.

The protein localises to the nucleus. May be involved in transcriptional regulation. The protein is Zinc finger protein 79 (ZNF79) of Homo sapiens (Human).